Reading from the N-terminus, the 216-residue chain is Putative ripening-related protein 4 (216 aa).

Residues 1 to 25 (MAANVKVLVVLALLQLMSLHAVVHG) form the signal peptide.

The protein belongs to the kiwellin family.

Its subcellular location is the secreted. The chain is Putative ripening-related protein 4 from Oryza sativa subsp. japonica (Rice).